We begin with the raw amino-acid sequence, 44 residues long: Cytochrome b559 subunit beta (44 aa).

A helical transmembrane segment spans residues 19–35 (WLAVHTLGVPTVFFLGA). A heme-binding site is contributed by H23.

This sequence belongs to the PsbE/PsbF family. Heterodimer of an alpha subunit and a beta subunit. PSII is composed of 1 copy each of membrane proteins PsbA, PsbB, PsbC, PsbD, PsbE, PsbF, PsbH, PsbI, PsbJ, PsbK, PsbL, PsbM, PsbT, PsbX, PsbY, PsbZ, Psb30/Ycf12, peripheral proteins PsbO, CyanoQ (PsbQ), PsbU, PsbV and a large number of cofactors. It forms dimeric complexes. Requires heme b as cofactor.

It is found in the cellular thylakoid membrane. Functionally, this b-type cytochrome is tightly associated with the reaction center of photosystem II (PSII). PSII is a light-driven water:plastoquinone oxidoreductase that uses light energy to abstract electrons from H(2)O, generating O(2) and a proton gradient subsequently used for ATP formation. It consists of a core antenna complex that captures photons, and an electron transfer chain that converts photonic excitation into a charge separation. This is Cytochrome b559 subunit beta from Trichodesmium erythraeum (strain IMS101).